Consider the following 321-residue polypeptide: Peroxidase 27 (321 aa).

The first 23 residues, 1–23 (MAASKRLVVSCLFLVLLFAQANS), serve as a signal peptide directing secretion. Disulfide bonds link Cys-35/Cys-113, Cys-68/Cys-73, Cys-119/Cys-317, and Cys-196/Cys-228. The Proton acceptor role is filled by His-66. 5 residues coordinate Ca(2+): Asp-67, Val-70, Gly-72, Asp-74, and Ser-76. Pro-159 contributes to the substrate binding site. Residue Asn-164 is glycosylated (N-linked (GlcNAc...) asparagine). Heme b is bound at residue His-189. Thr-190 serves as a coordination point for Ca(2+). Asn-205 carries an N-linked (GlcNAc...) asparagine glycan. Ca(2+) is bound by residues Asp-240, Ser-243, and Asp-248.

It belongs to the peroxidase family. Classical plant (class III) peroxidase subfamily. Requires heme b as cofactor. It depends on Ca(2+) as a cofactor. In terms of tissue distribution, expressed in the whole plant, but preferentially in roots and flowers.

The protein resides in the secreted. The catalysed reaction is 2 a phenolic donor + H2O2 = 2 a phenolic radical donor + 2 H2O. Removal of H(2)O(2), oxidation of toxic reductants, biosynthesis and degradation of lignin, suberization, auxin catabolism, response to environmental stresses such as wounding, pathogen attack and oxidative stress. These functions might be dependent on each isozyme/isoform in each plant tissue. This Arabidopsis thaliana (Mouse-ear cress) protein is Peroxidase 27 (PER27).